Reading from the N-terminus, the 618-residue chain is UvrABC system protein C (618 aa).

A GIY-YIG domain is found at 20–98 (TAPGVYRMYA…IKSLSPRYNV (79 aa)). Residues 207–242 (DQLGEEIMHSMQQASEALEFERAARLRDLLSSLRSM) form the UVR domain.

It belongs to the UvrC family. As to quaternary structure, interacts with UvrB in an incision complex.

The protein resides in the cytoplasm. In terms of biological role, the UvrABC repair system catalyzes the recognition and processing of DNA lesions. UvrC both incises the 5' and 3' sides of the lesion. The N-terminal half is responsible for the 3' incision and the C-terminal half is responsible for the 5' incision. The protein is UvrABC system protein C of Xanthomonas campestris pv. campestris (strain 8004).